A 330-amino-acid polypeptide reads, in one-letter code: UPF0324 membrane protein PG_2004 (330 aa).

Helical transmembrane passes span isoleucine 13 to valine 31, proline 36 to glycine 58, valine 71 to glycine 93, methionine 97 to isoleucine 114, serine 126 to leucine 148, alanine 158 to leucine 180, valine 248 to phenylalanine 270, leucine 285 to arginine 307, and glycine 312 to leucine 329.

It belongs to the UPF0324 family.

The protein localises to the cell membrane. The protein is UPF0324 membrane protein PG_2004 of Porphyromonas gingivalis (strain ATCC BAA-308 / W83).